Here is a 288-residue protein sequence, read N- to C-terminus: Phosphatidylserine decarboxylase proenzyme (288 aa).

Active-site charge relay system; for autoendoproteolytic cleavage activity residues include Asp-101, His-158, and Ser-262. Catalysis depends on Ser-262, which acts as the Schiff-base intermediate with substrate; via pyruvic acid; for decarboxylase activity. Ser-262 is subject to Pyruvic acid (Ser); by autocatalysis.

The protein belongs to the phosphatidylserine decarboxylase family. PSD-B subfamily. Prokaryotic type I sub-subfamily. In terms of assembly, heterodimer of a large membrane-associated beta subunit and a small pyruvoyl-containing alpha subunit. Requires pyruvate as cofactor. Post-translationally, is synthesized initially as an inactive proenzyme. Formation of the active enzyme involves a self-maturation process in which the active site pyruvoyl group is generated from an internal serine residue via an autocatalytic post-translational modification. Two non-identical subunits are generated from the proenzyme in this reaction, and the pyruvate is formed at the N-terminus of the alpha chain, which is derived from the carboxyl end of the proenzyme. The autoendoproteolytic cleavage occurs by a canonical serine protease mechanism, in which the side chain hydroxyl group of the serine supplies its oxygen atom to form the C-terminus of the beta chain, while the remainder of the serine residue undergoes an oxidative deamination to produce ammonia and the pyruvoyl prosthetic group on the alpha chain. During this reaction, the Ser that is part of the protease active site of the proenzyme becomes the pyruvoyl prosthetic group, which constitutes an essential element of the active site of the mature decarboxylase.

It is found in the cell membrane. The catalysed reaction is a 1,2-diacyl-sn-glycero-3-phospho-L-serine + H(+) = a 1,2-diacyl-sn-glycero-3-phosphoethanolamine + CO2. The protein operates within phospholipid metabolism; phosphatidylethanolamine biosynthesis; phosphatidylethanolamine from CDP-diacylglycerol: step 2/2. Its function is as follows. Catalyzes the formation of phosphatidylethanolamine (PtdEtn) from phosphatidylserine (PtdSer). This chain is Phosphatidylserine decarboxylase proenzyme, found in Alkalilimnicola ehrlichii (strain ATCC BAA-1101 / DSM 17681 / MLHE-1).